The sequence spans 223 residues: Killer cell lectin-like receptor subfamily B member 1B allele C (223 aa).

The Cytoplasmic segment spans residues 1 to 45; the sequence is MDTAVVYADLHLARTGEPKRESPPSLSPDTCQCPRWHRLALKLGC. Positions 5 to 10 match the ITIM motif motif; that stretch reads VVYADL. Residues 31–34 carry the LCK-binding motif motif; that stretch reads CQCP. The helical; Signal-anchor for type II membrane protein transmembrane segment at 46-66 threads the bilayer; sequence ACFILLVLSVIGLGVLVLTLL. Over 67–223 the chain is Extracellular; sequence QKPLLQNSPA…LKRESTCNDS (157 aa). The region spanning 101 to 211 is the C-type lectin domain; it reads HRDKCFHVSQ…CDSDNIWICQ (111 aa). Cystine bridges form between Cys122/Cys210 and Cys189/Cys202.

In terms of assembly, homodimer; disulfide-linked. Interacts with tyrosine kinase LCK. Binds PTPN6/SHP-1 in a phosphorylation-dependent manner. As to expression, expressed in a subset of natural killer cells.

Its subcellular location is the membrane. Receptor for CLEC2D/OCIL. Ligand-binding contributes to inhibition of cytotoxic natural killer (NK) cells. May mediate MHC class I-independent 'missing-self' recognition of allografts, tumor cells and virus-infected cells. This is Killer cell lectin-like receptor subfamily B member 1B allele C from Rattus norvegicus (Rat).